A 699-amino-acid chain; its full sequence is Elongation factor G (699 aa).

The tr-type G domain maps to 8–288 (EDYRNFGIMA…AVVDYLPSPL (281 aa)). Residues 17–24 (AHIDAGKT), 86–90 (DTPGH), and 140–143 (NKMD) contribute to the GTP site.

Belongs to the TRAFAC class translation factor GTPase superfamily. Classic translation factor GTPase family. EF-G/EF-2 subfamily.

It localises to the cytoplasm. Its function is as follows. Catalyzes the GTP-dependent ribosomal translocation step during translation elongation. During this step, the ribosome changes from the pre-translocational (PRE) to the post-translocational (POST) state as the newly formed A-site-bound peptidyl-tRNA and P-site-bound deacylated tRNA move to the P and E sites, respectively. Catalyzes the coordinated movement of the two tRNA molecules, the mRNA and conformational changes in the ribosome. This Rhizobium etli (strain CIAT 652) protein is Elongation factor G.